We begin with the raw amino-acid sequence, 570 residues long: Putative periplasmic trehalase (570 aa).

A signal peptide spans 1–34; it reads MIPPEIRRSVLLQKAIKLALAGTLLTFASFSATA. Substrate contacts are provided by residues R159, 166-167, N203, 212-214, 284-286, and G317; these read WD, RSQ, and RPE. Active-site proton donor/acceptor residues include D319 and E503. Residue E518 participates in substrate binding. The interval 544–570 is disordered; sequence KPCDSVPSTRPASLSATPTKTPSAATQ. Over residues 554 to 570 the composition is skewed to low complexity; sequence PASLSATPTKTPSAATQ.

This sequence belongs to the glycosyl hydrolase 37 family. Monomer.

Its subcellular location is the periplasm. The catalysed reaction is alpha,alpha-trehalose + H2O = alpha-D-glucose + beta-D-glucose. Provides the cells with the ability to utilize trehalose at high osmolarity by splitting it into glucose molecules that can subsequently be taken up by the phosphotransferase-mediated uptake system. The protein is Putative periplasmic trehalase of Salmonella typhi.